Here is a 153-residue protein sequence, read N- to C-terminus: Ribosome maturation factor RimP (153 aa).

The protein belongs to the RimP family.

The protein resides in the cytoplasm. Its function is as follows. Required for maturation of 30S ribosomal subunits. The sequence is that of Ribosome maturation factor RimP from Actinobacillus pleuropneumoniae serotype 5b (strain L20).